The primary structure comprises 137 residues: MLQPKRTKFRKMHKGRIKGLAKGGSDLNFGTYGLKAVTPERVTARQIEAARRAMTRHMKRQGRVWIRIFPDTPVTSKPVEVRMGKGKGSVDFWACKVKPGRVMFEIDGVNEDIAREALRLAAMKLPVQTRIVVREDW.

Belongs to the universal ribosomal protein uL16 family. As to quaternary structure, part of the 50S ribosomal subunit.

Binds 23S rRNA and is also seen to make contacts with the A and possibly P site tRNAs. This Ruegeria sp. (strain TM1040) (Silicibacter sp.) protein is Large ribosomal subunit protein uL16.